We begin with the raw amino-acid sequence, 45 residues long: Pseudo-hevein (45 aa).

Residues Glu-1–Gly-43 enclose the Chitin-binding type-1 domain. 4 disulfide bridges follow: Cys-3/Cys-18, Cys-12/Cys-24, Cys-17/Cys-31, and Cys-37/Cys-41.

Functionally, N-acetyl-D-glucosamine / N-acetyl-D-neuraminic acid binding lectin. Can inhibit fungal growth. This Hevea brasiliensis (Para rubber tree) protein is Pseudo-hevein.